The sequence spans 319 residues: Ribonucleoside-diphosphate reductase small chain (319 aa).

Residues D70, E101, and H104 each contribute to the Fe cation site. The active site involves Y108. The Fe cation site is built by E163, E197, and H200. The segment at 313 to 319 (FSLDVDF) is interaction with R1.

Belongs to the ribonucleoside diphosphate reductase small chain family. Interacts with RNR1/OPG080 subunit. Can interact with host RNR1 supunit. It depends on Fe cation as a cofactor.

It carries out the reaction a 2'-deoxyribonucleoside 5'-diphosphate + [thioredoxin]-disulfide + H2O = a ribonucleoside 5'-diphosphate + [thioredoxin]-dithiol. Ribonucleoside-diphosphate reductase holoenzyme provides the precursors necessary for viral DNA synthesis. Allows virus growth in non-dividing cells. Catalyzes the biosynthesis of deoxyribonucleotides from the corresponding ribonucleotides. This chain is Ribonucleoside-diphosphate reductase small chain (OPG048), found in Vaccinia virus (strain Copenhagen) (VACV).